Here is a 463-residue protein sequence, read N- to C-terminus: Na(+)/H(+) antiporter NhaA 3 (463 aa).

The next 11 membrane-spanning stretches (helical) occupy residues 28 to 48, 79 to 99, 114 to 134, 144 to 164, 173 to 193, 196 to 216, 232 to 252, 305 to 325, 344 to 364, 377 to 397, and 413 to 433; these read FLAT…AALL, LHHW…GLEI, IAVP…IYFV, GWGI…ALFG, LFLL…VGIF, DHLN…ILGL, LVLW…GVLV, VLHP…NAGV, VAAA…VAAI, YGHL…SLFI, and IGIL…LRVL. Residues 444–463 form a disordered region; that stretch reads TDEPVPRLPPRPWRAPVPAK. The span at 449 to 463 shows a compositional bias: pro residues; it reads PRLPPRPWRAPVPAK.

This sequence belongs to the NhaA Na(+)/H(+) (TC 2.A.33) antiporter family.

The protein resides in the cell membrane. It carries out the reaction Na(+)(in) + 2 H(+)(out) = Na(+)(out) + 2 H(+)(in). Functionally, na(+)/H(+) antiporter that extrudes sodium in exchange for external protons. This is Na(+)/H(+) antiporter NhaA 3 from Frankia alni (strain DSM 45986 / CECT 9034 / ACN14a).